Reading from the N-terminus, the 191-residue chain is FMN reductase (NADH) RutF (191 aa).

Belongs to the non-flavoprotein flavin reductase family. RutF subfamily.

It catalyses the reaction FMNH2 + NAD(+) = FMN + NADH + 2 H(+). Its function is as follows. Catalyzes the reduction of FMN to FMNH2 which is used to reduce pyrimidine by RutA via the Rut pathway. This Escherichia coli O1:K1 / APEC protein is FMN reductase (NADH) RutF.